The following is a 348-amino-acid chain: N-(sulfonatooxy)prop-2-enimidothioate sulfolyase (348 aa).

Kelch repeat units lie at residues 1 to 33 (MART…VIGD), 34 to 85 (KLYC…VAVG), 87 to 133 (KLYV…FHSM), 139 to 194 (HVYV…VVQG), 209 to 254 (KIPT…FAHA), 259 to 314 (YIII…ASTT), and 322 to 348 (GLLV…NSST). A (Z)-N-(sulfonatooxy)alkanimidothioate is bound by residues Glu46, Arg94, Thr129, Phe130, and Arg157. Residue Arg94 is the Proton donor of the active site. Arg157 acts as the Proton donor in catalysis. The active-site Proton acceptor is the Glu220. Glu266 serves as a coordination point for Fe(2+). Arg269 contributes to the a (Z)-N-(sulfonatooxy)alkanimidothioate binding site. Residues Asp270 and His274 each coordinate Fe(2+). A (Z)-N-(sulfonatooxy)alkanimidothioate contacts are provided by Trp309 and Val310.

Homodimer. It depends on Fe(2+) as a cofactor. As to expression, expressed constitutively in roots, stems, leaves, flowers, siliques and seedlings.

The enzyme catalyses (Z)-N-(sulfonatooxy)prop-2-enimidothioate = allyl thiocyanate + sulfate. The catalysed reaction is (Z)-N-(sulfonatooxy)prop-2-enimidothioate = 2-(thiiran-2-yl)acetonitrile + sulfate. It catalyses the reaction (Z)-N-(sulfonatooxy)prop-2-enimidothioate = allyl isothiocyanate + sulfate. It carries out the reaction (Z)-phenyl-N-(sulfonatooxy)methanimidothioate = phenylacetonitrile + sulfur + sulfate. The enzyme catalyses glucoerucin + H2O = (Z)-4-methylsulfanylbutyl-N-(sulfonatooxy)methanimidothioate + D-glucose. The catalysed reaction is (Z)-4-methylsulfanylbutyl-N-(sulfonatooxy)methanimidothioate = 5-(methylsulfanyl)pentanenitrile + sulfur + sulfate + H(+). With respect to regulation, stimulated by the presence of Fe(2+) leading to an increase formation of both thiocyanate and epithionitrile with allylglucosinolate as substrate in the presence of myrosinase. Repressed by EDTA. In terms of biological role, specifier protein that contributes to constitutive and herbivore-induced simple nitrile formation. Catalyzes allylthiocyanate and corresponding epithionitrile formation from allylglucosinolate in the presence of myrosinase. Also converts aliphatic glucosinolates, such as indol-3-ylmethylglucosinolate, 4-methylsulfinylbutylglucosinolate, 4-methylthiobutyl- and benzylisothiocyanate, to simple nitriles. This Thlaspi arvense (Field penny-cress) protein is N-(sulfonatooxy)prop-2-enimidothioate sulfolyase.